The sequence spans 369 residues: MKTPFEKIRIISCILVIVSTNVVGQKCNGGANCIPLEECTDLFQQLKQGNSPQLTRLLRGLHCGFEDLNSPKICCPPEFLARRSAFSSAGTNSNPTSILPNEKVCGIQNNDRIFGGIQTEIDEHPWMALLRYDKPLGWGFYCGGVLIAPMYVLTAAHCVKGSDLPSSWQLSQVRLGEWNTSTETDCVEGDCSGPVQDIPVQQIIAHENYDPNDKDQQNDIALLRLSRNAQFNDFVSPICLPTSNELRQNEFESDYMEVAGWGKTETRSESDVKLKVRVPIVNREECANVYSNVDRRVTNKQICAGGLAGRDSCRGDSGGALMGQSPKANNWYVFGVVSYGPSPCGTEGWPGVYTRVGSFMDWILSKLEQ.

The signal sequence occupies residues 1–24 (MKTPFEKIRIISCILVIVSTNVVG). A propeptide spanning residues 25–81 (QKCNGGANCIPLEECTDLFQQLKQGNSPQLTRLLRGLHCGFEDLNSPKICCPPEFLA) is cleaved from the precursor. One can recognise a Clip domain in the interval 26 to 75 (KCNGGANCIPLEECTDLFQQLKQGNSPQLTRLLRGLHCGFEDLNSPKICC). 8 disulfides stabilise this stretch: Cys-27–Cys-74, Cys-33–Cys-63, Cys-39–Cys-75, Cys-105–Cys-239, Cys-142–Cys-158, Cys-186–Cys-191, Cys-286–Cys-303, and Cys-313–Cys-344. A Peptidase S1 domain is found at 113–368 (IFGGIQTEID…FMDWILSKLE (256 aa)). The active-site Charge relay system is the His-157. The Ca(2+) site is built by Glu-177, Asn-179, Thr-182, and Asp-185. A glycan (N-linked (GlcNAc...) asparagine) is linked at Asn-179. Asp-219 (charge relay system) is an active-site residue. Residue Ser-317 is the Charge relay system of the active site.

It belongs to the peptidase S1 family. CLIP subfamily. As to quaternary structure, in the active form, heterodimer of a light chain and a heavy chain; disulfide-linked. In terms of processing, proteolytically cleaved for activation. Cleavage produces a light chain and a catalytic heavy chain which remains covalently associated probably through an interchain disulfide bond. In terms of tissue distribution, in larvae, expressed in the fat body and hemocytes.

It localises to the secreted. Its subcellular location is the cytoplasm. Its activity is regulated as follows. Inhibited by (p-amidinophenyl) methanesulfonyl fluoride, p-nitrophenyl-p'-guanidinobenzoate, D-phenylalanyl-L-prolyl-L-arginyl chloromethane, leupeptin, antipain and to a lesser extent by antithrombin III. In terms of biological role, endopeptidase with selective post-Arg cleavage site. Functions in the innate immune response to fungal and Gram-positive bacterial infections. Upon pathogen infection promotes nodulation; a cellular defense response in which hemocytes surround and isolate invading pathogens forming aggregates called nodules. Involved in activating nodule formation in response to infection with M.luteus, E.coli or S.cerevisiae. Able to bind the microbes M.luteus, E.coli or S.cerevisiae. According to another report, does not bind microorganisms. This Bombyx mori (Silk moth) protein is CLIP domain-containing serine protease HP8.